We begin with the raw amino-acid sequence, 253 residues long: MTEIKETITITFCDCAENHVGMQQLGKLSKKGFSLDDLIKIKEWYSDRGLSTELFDLNWPLESLELEPDKKAYFLVIRKGTNLHTNSDELMNQLRNLEWDSKAFMYGRVVNKKARYNLCFGNINQKPNYQQIKGRVYKFTDIQLLDQAKNSLEEVTGINSLVAEGNYYYDVNKCGIGFHGDSERRIVIGIRLGSTLQLEYQWYQYSNPVGERMTIELNNGDIYFMSEKAVGTDWKKKNIPTLRHATGCDKFVK.

This is an uncharacterized protein from Acanthamoeba polyphaga mimivirus (APMV).